The primary structure comprises 890 residues: Chloroquine resistance transporter (890 aa).

Disordered stretches follow at residues 1-163 (MPPA…EAPL) and 280-300 (GMQR…AAEG). Topologically, residues 1–349 (MPPAHHGSGG…RATRWIDRNA (349 aa)) are cytoplasmic. The span at 8–19 (SGGRRRPGRGNK) shows a compositional bias: basic residues. Composition is skewed to low complexity over residues 102-126 (APSQ…SSRS) and 134-156 (SPVA…TSAS). The chain crosses the membrane as a helical span at residues 350–372 (ATVRVACYTFLLLVTSTGNTICF). Topologically, residues 373–391 (KKMIDKMPNYSPCLTQVTT) are vacuolar. A helical transmembrane segment spans residues 392 to 412 (VVFVPVFFALSLYTDYAGGLP). The Cytoplasmic segment spans residues 413–422 (QEMADFPKRN). The helical transmembrane segment at 423 to 443 (FAVMGFLDSFSGVMAIIGAVH) threads the bilayer. Residues 444–447 (TTGT) are Vacuolar-facing. A helical transmembrane segment spans residues 448–468 (TQVVLQQSCIVFSLLASIVML). Topologically, residues 469–471 (RKR) are cytoplasmic. The helical transmembrane segment at 472-492 (FHAAHYLGALVIILGVLVVKL) threads the bilayer. The Vacuolar portion of the chain corresponds to 493 to 505 (PDLLHPSSDGGGD). The chain crosses the membrane as a helical span at residues 506–526 (VFVFNLLYLLSNLPTAVSCVY). Residues 527-544 (KEVAFRGVEMGTNYLQAW) are Cytoplasmic-facing. A helical transmembrane segment spans residues 545–565 (VALFQFLIGFLVLPLNALPVL). At 566–614 (GPQRVPLAELPASLWNGTRCLFGFNTIVTNCGGAGNMESPCDNCEGAWK) the chain is on the vacuolar side. N-linked (GlcNAc...) asparagine glycosylation occurs at asparagine 581. Disulfide bonds link cysteine 585–cysteine 609 and cysteine 596–cysteine 606. The helical transmembrane segment at 615-634 (YVGMYLSFNLLYNMFIIFVV) threads the bilayer. Topologically, residues 635 to 640 (KSGGAA) are cytoplasmic. Residues 641-663 (LTFLVSTLRLPVTALAFCSRAIM) traverse the membrane as a helical segment. Residues 664-673 (GDRAVPPKAT) lie on the Vacuolar side of the membrane. Residues 674–694 (DFYGLLVLILGLVIYRAGGIM) form a helical membrane-spanning segment. Residues 695-890 (KRRAQRRAVA…GKSRANNGCI (196 aa)) lie on the Cytoplasmic side of the membrane. The disordered stretch occupies residues 798–871 (AAFTPFTQRM…NRVGGYEPPS (74 aa)).

It belongs to the CRT-like transporter family.

It localises to the vacuole membrane. Functionally, nutrient transporter. Involved in maintaining the osmotic homeostasis of the digestive vacuole. Required for the proper organization of the endolysosomal system and, in turn, indirectly for microneme secretion and parasite invasion. Required for bradyzoite viability and cyst development. In Toxoplasma gondii, this protein is Chloroquine resistance transporter.